A 56-amino-acid chain; its full sequence is Serine protease inhibitor Kazal-type 1 (56 aa).

Residues 3-56 enclose the Kazal-like domain; sequence LGREAKCNNNAGGCTKIYNPVCGTDGNTYPNECMLCVENQKRQMPVLIQRSGPC. Intrachain disulfides connect cysteine 9/cysteine 38, cysteine 16/cysteine 35, and cysteine 24/cysteine 56.

Its subcellular location is the secreted. Functionally, serine protease inhibitor which exhibits anti-trypsin activity. In the pancreas, protects against trypsin-catalyzed premature activation of zymogens. In the male reproductive tract, binds to sperm heads where it modulates sperm capacitance by inhibiting calcium uptake and nitrogen oxide (NO) production. In Equus caballus (Horse), this protein is Serine protease inhibitor Kazal-type 1 (SPINK1).